Here is a 207-residue protein sequence, read N- to C-terminus: B2 protein (207 aa).

The segment at 1 to 68 (MIDQEESNFN…FKTLPPAESL (68 aa)) is disordered. Composition is skewed to low complexity over residues 8–26 (NFNFNFNQPQQPQQQQFHG) and 35–52 (KNNNNNSESGNKNGGENK). The 133-residue stretch at 72 to 204 (ETVGGYIFVC…AISLLDIFEE (133 aa)) folds into the DCD domain.

In Daucus carota (Wild carrot), this protein is B2 protein.